Here is a 112-residue protein sequence, read N- to C-terminus: Large ribosomal subunit protein bL21 (112 aa).

This sequence belongs to the bacterial ribosomal protein bL21 family. In terms of assembly, part of the 50S ribosomal subunit. Contacts protein L20.

Functionally, this protein binds to 23S rRNA in the presence of protein L20. This Buchnera aphidicola subsp. Baizongia pistaciae (strain Bp) protein is Large ribosomal subunit protein bL21.